Here is a 1598-residue protein sequence, read N- to C-terminus: Transposon Ty2-LR2 Gag-Pol polyprotein (1598 aa).

3 stretches are compositionally biased toward polar residues: residues 1–11 (MESQQLHQNPH), 19–39 (ASVT…SASN), and 49–60 (KVNSQEETTPGT). 2 disordered regions span residues 1–88 (MESQ…YQQH) and 359–449 (QHSE…SNDE). The segment at 295–397 (ENNINVSDRL…SSKPRAAKAH (103 aa)) is RNA-binding. Residues 369-381 (TSPNTTNTKVTTR) show a composition bias toward low complexity. Polar residues-rich tracts occupy residues 399 to 408 (IATSSKFSRV) and 415 to 435 (ESTV…GQQQ). Asp-457 acts as the For protease activity; shared with dimeric partner in catalysis. The segment at 579–636 (NVNKSKSVNKYPYPLIHRMLGHANFRSIQKSLKKNAVTYLKESDIEWSNASTYQCPDC) is integrase-type zinc finger-like. One can recognise an Integrase catalytic domain in the interval 656-831 (ESYEPFQYLH…AGLDITTILP (176 aa)). Mg(2+) is bound by residues Asp-667 and Asp-732. Polar residues-rich tracts occupy residues 915 to 927 (SFIE…QSYD), 1009 to 1034 (ESDT…STNE), and 1065 to 1082 (QRNS…STPS). Disordered stretches follow at residues 915 to 934 (SFIE…ESDH), 1004 to 1034 (MGGT…STNE), 1059 to 1135 (TEEP…KSSK), 1146 to 1165 (LPLP…VSKD), and 1170 to 1205 (HSRQ…TEIE). The segment covering 1151–1165 (LTHKSPTDTSDVSKD) has biased composition (basic and acidic residues). Residues 1193 to 1227 (KKRSLEDNETEIEVSRDTWNNKNMRSLEPPRSKKR) carry the Bipartite nuclear localization signal motif. A Reverse transcriptase Ty1/copia-type domain is found at 1353–1491 (NDYYITQLDI…DILGLEIKYQ (139 aa)). 3 residues coordinate Mg(2+): Asp-1361, Asp-1442, and Asp-1443.

In terms of assembly, the capsid protein forms a homotrimer, from which the VLPs are assembled. The protease is a homodimer, whose active site consists of two apposed aspartic acid residues. Initially, virus-like particles (VLPs) are composed of the structural unprocessed proteins Gag and Gag-Pol, and also contain the host initiator methionine tRNA (tRNA(i)-Met) which serves as a primer for minus-strand DNA synthesis, and a dimer of genomic Ty RNA. Processing of the polyproteins occurs within the particle and proceeds by an ordered pathway, called maturation. First, the protease (PR) is released by autocatalytic cleavage of the Gag-Pol polyprotein, and this cleavage is a prerequisite for subsequent processing at the remaining sites to release the mature structural and catalytic proteins. Maturation takes place prior to the RT reaction and is required to produce transposition-competent VLPs.

It localises to the cytoplasm. The protein resides in the nucleus. It catalyses the reaction DNA(n) + a 2'-deoxyribonucleoside 5'-triphosphate = DNA(n+1) + diphosphate. It carries out the reaction Endonucleolytic cleavage to 5'-phosphomonoester.. In terms of biological role, capsid protein (CA) is the structural component of the virus-like particle (VLP), forming the shell that encapsulates the retrotransposons dimeric RNA genome. The particles are assembled from trimer-clustered units and there are holes in the capsid shells that allow for the diffusion of macromolecules. CA also has nucleocapsid-like chaperone activity, promoting primer tRNA(i)-Met annealing to the multipartite primer-binding site (PBS), dimerization of Ty2 RNA and initiation of reverse transcription. Its function is as follows. The aspartyl protease (PR) mediates the proteolytic cleavages of the Gag and Gag-Pol polyproteins after assembly of the VLP. Reverse transcriptase/ribonuclease H (RT) is a multifunctional enzyme that catalyzes the conversion of the retro-elements RNA genome into dsDNA within the VLP. The enzyme displays a DNA polymerase activity that can copy either DNA or RNA templates, and a ribonuclease H (RNase H) activity that cleaves the RNA strand of RNA-DNA heteroduplexes during plus-strand synthesis and hydrolyzes RNA primers. The conversion leads to a linear dsDNA copy of the retrotransposon that includes long terminal repeats (LTRs) at both ends. Functionally, integrase (IN) targets the VLP to the nucleus, where a subparticle preintegration complex (PIC) containing at least integrase and the newly synthesized dsDNA copy of the retrotransposon must transit the nuclear membrane. Once in the nucleus, integrase performs the integration of the dsDNA into the host genome. This Saccharomyces cerevisiae (strain ATCC 204508 / S288c) (Baker's yeast) protein is Transposon Ty2-LR2 Gag-Pol polyprotein (TY2B-LR2).